Here is a 558-residue protein sequence, read N- to C-terminus: Membrane protein insertase YidC (558 aa).

5 helical membrane passes run 3–23 (IKRT…FDNW), 364–384 (FVGN…AVFF), 438–458 (LPVV…LASV), 477–497 (PYFI…KLNP), and 508–528 (MMFM…GLVL).

This sequence belongs to the OXA1/ALB3/YidC family. Type 1 subfamily. Interacts with the Sec translocase complex via SecD. Specifically interacts with transmembrane segments of nascent integral membrane proteins during membrane integration.

It is found in the cell inner membrane. Required for the insertion and/or proper folding and/or complex formation of integral membrane proteins into the membrane. Involved in integration of membrane proteins that insert both dependently and independently of the Sec translocase complex, as well as at least some lipoproteins. Aids folding of multispanning membrane proteins. In Burkholderia pseudomallei (strain K96243), this protein is Membrane protein insertase YidC.